Here is a 100-residue protein sequence, read N- to C-terminus: Large ribosomal subunit protein uL23 (100 aa).

Belongs to the universal ribosomal protein uL23 family. As to quaternary structure, part of the 50S ribosomal subunit. Contacts protein L29, and trigger factor when it is bound to the ribosome.

In terms of biological role, one of the early assembly proteins it binds 23S rRNA. One of the proteins that surrounds the polypeptide exit tunnel on the outside of the ribosome. Forms the main docking site for trigger factor binding to the ribosome. The chain is Large ribosomal subunit protein uL23 from Buchnera aphidicola subsp. Schizaphis graminum (strain Sg).